The chain runs to 664 residues: DNA mismatch repair protein MutL (664 aa).

A disordered region spans residues 382–447 (RKAGQEQQLQ…YGEPAPSKQQ (66 aa)). Positions 427–436 (RHTTSSNQSE) are enriched in polar residues.

It belongs to the DNA mismatch repair MutL/HexB family.

This protein is involved in the repair of mismatches in DNA. It is required for dam-dependent methyl-directed DNA mismatch repair. May act as a 'molecular matchmaker', a protein that promotes the formation of a stable complex between two or more DNA-binding proteins in an ATP-dependent manner without itself being part of a final effector complex. The protein is DNA mismatch repair protein MutL of Vibrio vulnificus (strain YJ016).